A 255-amino-acid polypeptide reads, in one-letter code: MVLVVDVGNTHIVLGVFEGKKLLANWRLGTNKERTSDELGMLILGLFNHEKLSIDKVKSVVVASVVPPIMYTLEHAIKKYINIQPMIIGPGTKTGINIRYQNPKEVGADRIVNAVAGFELYGGPLIIVDMGTATTFCAISEKGEYLGGVICPGIKISAEALYQKAAKLPRIDLVKPESVIGKNTISSMQSGVFFGYVGQVDYIVNRIKNEMHEENVRVIATGGISRMITEESITINEFNPTLTLEGLRLIYERNV.

6-13 contacts ATP; it reads DVGNTHIV. Substrate is bound by residues tyrosine 100 and 107-110; that span reads GADR. Catalysis depends on aspartate 109, which acts as the Proton acceptor. Position 129 (aspartate 129) interacts with K(+). Threonine 132 is a binding site for ATP. Threonine 184 is a binding site for substrate.

The protein belongs to the type III pantothenate kinase family. In terms of assembly, homodimer. Requires NH4(+) as cofactor. K(+) is required as a cofactor.

It is found in the cytoplasm. The enzyme catalyses (R)-pantothenate + ATP = (R)-4'-phosphopantothenate + ADP + H(+). The protein operates within cofactor biosynthesis; coenzyme A biosynthesis; CoA from (R)-pantothenate: step 1/5. Functionally, catalyzes the phosphorylation of pantothenate (Pan), the first step in CoA biosynthesis. In Ruminiclostridium cellulolyticum (strain ATCC 35319 / DSM 5812 / JCM 6584 / H10) (Clostridium cellulolyticum), this protein is Type III pantothenate kinase.